Reading from the N-terminus, the 147-residue chain is Hemoglobin subunit epsilon (147 aa).

One can recognise a Globin domain in the interval histidine 3–histidine 147. Phosphoserine is present on residues serine 14 and serine 51. Heme b is bound by residues histidine 64 and histidine 93.

It belongs to the globin family. As to expression, red blood cells.

Functionally, hemoglobin epsilon chain is an embryonic-type beta-type chain found in prenatal and neonatal marsupials. This chain is Hemoglobin subunit epsilon (HBE1), found in Notamacropus eugenii (Tammar wallaby).